A 72-amino-acid polypeptide reads, in one-letter code: MSCCGGSCGCGSGCKCGNGCGGCGMYPDMEKSATFSIVEGVAPVHNYGRVEEKAAGEGCKCGSNCTCDPCNC.

This sequence belongs to the metallothionein superfamily. Type 15 family.

Functionally, metallothioneins have a high content of cysteine residues that bind various heavy metals. The sequence is that of Metallothionein-like protein type 2 from Solanum lycopersicum (Tomato).